Here is a 299-residue protein sequence, read N- to C-terminus: NAD(+) hydrolase PdTIR (299 aa).

The TIR domain maps to 164 to 297 (PPHDIFISHA…EIVADLMAII (134 aa)). NAD(+) is bound by residues 173-174 (AW) and R203. E239 is a catalytic residue.

As to quaternary structure, homodimer. Interacts with host MYD88.

It catalyses the reaction NAD(+) + H2O = ADP-D-ribose + nicotinamide + H(+). Functionally, NAD(+) hydrolase (NADase) that catalyzes cleavage of NAD(+) into ADP-D-ribose (ADPR) and nicotinamide. This chain is NAD(+) hydrolase PdTIR, found in Paracoccus denitrificans (strain Pd 1222).